Here is a 77-residue protein sequence, read N- to C-terminus: Translation initiation factor IF-1, chloroplastic (77 aa).

The 71-residue stretch at 1-71 (MKEQKWIHEG…TRGRIIYRLR (71 aa)) folds into the S1-like domain.

The protein belongs to the IF-1 family. As to quaternary structure, component of the 30S ribosomal translation pre-initiation complex which assembles on the 30S ribosome in the order IF-2 and IF-3, IF-1 and N-formylmethionyl-tRNA(fMet); mRNA recruitment can occur at any time during PIC assembly.

The protein resides in the plastid. Its subcellular location is the chloroplast. Its function is as follows. One of the essential components for the initiation of protein synthesis. Stabilizes the binding of IF-2 and IF-3 on the 30S subunit to which N-formylmethionyl-tRNA(fMet) subsequently binds. Helps modulate mRNA selection, yielding the 30S pre-initiation complex (PIC). Upon addition of the 50S ribosomal subunit IF-1, IF-2 and IF-3 are released leaving the mature 70S translation initiation complex. The polypeptide is Translation initiation factor IF-1, chloroplastic (Hedera helix (English ivy)).